The following is a 44-amino-acid chain: Photosystem I reaction center subunit IX (44 aa).

A helical membrane pass occupies residues 9 to 29; the sequence is YMRSAPVVAAAWITMTAGIII.

It belongs to the PsaJ family.

Its subcellular location is the cellular thylakoid membrane. Functionally, may help in the organization of the PsaE and PsaF subunits. The polypeptide is Photosystem I reaction center subunit IX (Prochlorococcus marinus (strain MIT 9312)).